The following is a 231-amino-acid chain: Endonuclease NucS (231 aa).

It belongs to the NucS endonuclease family.

The protein resides in the cytoplasm. Functionally, cleaves both 3' and 5' ssDNA extremities of branched DNA structures. This Kocuria rhizophila (strain ATCC 9341 / DSM 348 / NBRC 103217 / DC2201) protein is Endonuclease NucS.